We begin with the raw amino-acid sequence, 361 residues long: Phospho-N-acetylmuramoyl-pentapeptide-transferase (361 aa).

Helical transmembrane passes span 25–45 (TGGAVVTGALFVFLCGPWIID), 72–92 (TPTMGGLMILSGLTVGTVLWA), 95–115 (LNPYVWIVLAVTLGFGFVGFY), 135–155 (LLIEFAIAGAACFALVWLGRG), 169–189 (VVLNLGWYFVIFGAFVIVGAG), 200–220 (GLAIVPVMIAAASFGMISYLV), 240–260 (LAVLCGALLGAGLGFLWFNAP), 264–284 (IFMGDTGSLALGGMLGSIAVA), 289–309 (IVLAVIGGLFVLEAVSVIVQV), and 338–358 (QIVIRFWIIAVILALAGLSTL).

Belongs to the glycosyltransferase 4 family. MraY subfamily. Mg(2+) is required as a cofactor.

It is found in the cell inner membrane. It catalyses the reaction UDP-N-acetyl-alpha-D-muramoyl-L-alanyl-gamma-D-glutamyl-meso-2,6-diaminopimeloyl-D-alanyl-D-alanine + di-trans,octa-cis-undecaprenyl phosphate = di-trans,octa-cis-undecaprenyl diphospho-N-acetyl-alpha-D-muramoyl-L-alanyl-D-glutamyl-meso-2,6-diaminopimeloyl-D-alanyl-D-alanine + UMP. It functions in the pathway cell wall biogenesis; peptidoglycan biosynthesis. In terms of biological role, catalyzes the initial step of the lipid cycle reactions in the biosynthesis of the cell wall peptidoglycan: transfers peptidoglycan precursor phospho-MurNAc-pentapeptide from UDP-MurNAc-pentapeptide onto the lipid carrier undecaprenyl phosphate, yielding undecaprenyl-pyrophosphoryl-MurNAc-pentapeptide, known as lipid I. This chain is Phospho-N-acetylmuramoyl-pentapeptide-transferase, found in Rhodopseudomonas palustris (strain HaA2).